Here is a 134-residue protein sequence, read N- to C-terminus: Large ribosomal subunit protein eL28 (134 aa).

The residue at position 60 (S60) is a Phosphoserine.

It belongs to the eukaryotic ribosomal protein eL28 family. Component of the large ribosomal subunit (LSU). Mature yeast ribosomes consist of a small (40S) and a large (60S) subunit. The 40S small subunit contains 1 molecule of ribosomal RNA (18S rRNA) and at least 33 different proteins. The large 60S subunit contains 3 rRNA molecules (25S, 5.8S and 5S rRNA) and at least 46 different proteins.

The protein localises to the cytoplasm. Its function is as follows. Component of the ribosome, a large ribonucleoprotein complex responsible for the synthesis of proteins in the cell. The small ribosomal subunit (SSU) binds messenger RNAs (mRNAs) and translates the encoded message by selecting cognate aminoacyl-transfer RNA (tRNA) molecules. The large subunit (LSU) contains the ribosomal catalytic site termed the peptidyl transferase center (PTC), which catalyzes the formation of peptide bonds, thereby polymerizing the amino acids delivered by tRNAs into a polypeptide chain. The nascent polypeptides leave the ribosome through a tunnel in the LSU and interact with protein factors that function in enzymatic processing, targeting, and the membrane insertion of nascent chains at the exit of the ribosomal tunnel. The protein is Large ribosomal subunit protein eL28 (rpl44) of Schizosaccharomyces pombe (strain 972 / ATCC 24843) (Fission yeast).